The following is a 168-amino-acid chain: Envelope glycoprotein L (168 aa).

The N-terminal stretch at 1 to 22 (MMWKWVTLLLFVLVCGDNPVNA) is a signal peptide. The interaction with gH stretch occupies residues 25–138 (HNPFVCCHQK…TDSSGFKNNL (114 aa)).

Belongs to the herpesviridae glycoprotein L family. Interacts with glycoprotein H (gH); this interaction is necessary for the correct processing and cell surface expression of gH. The heterodimer gH/gL seems to interact with gB trimers during fusion.

The protein resides in the virion membrane. Its subcellular location is the host cell membrane. It is found in the host Golgi apparatus. The protein localises to the host trans-Golgi network. In terms of biological role, the heterodimer glycoprotein H-glycoprotein L is required for the fusion of viral and plasma membranes leading to virus entry into the host cell. Acts as a functional inhibitor of gH and maintains gH in an inhibited form. Upon binding to host integrins, gL dissociates from gH leading to activation of the viral fusion glycoproteins gB and gH. This is Envelope glycoprotein L from Connochaetes taurinus (Blue wildebeest).